The primary structure comprises 353 residues: 3-dehydroquinate synthase (353 aa).

It belongs to the archaeal-type DHQ synthase family.

It catalyses the reaction 2-amino-2,3,7-trideoxy-D-lyxo-hept-6-ulosonate + NAD(+) + H2O = 3-dehydroquinate + NH4(+) + NADH + H(+). Functionally, catalyzes the oxidative deamination and cyclization of 2-amino-3,7-dideoxy-D-threo-hept-6-ulosonic acid (ADH) to yield 3-dehydroquinate (DHQ), which is fed into the canonical shikimic pathway of aromatic amino acid biosynthesis. The polypeptide is 3-dehydroquinate synthase (Nitrosopumilus maritimus (strain SCM1)).